A 227-amino-acid chain; its full sequence is Cytidylate kinase (227 aa).

12–20 (GPSGAGKGT) contributes to the ATP binding site.

It belongs to the cytidylate kinase family. Type 1 subfamily.

The protein resides in the cytoplasm. It catalyses the reaction CMP + ATP = CDP + ADP. The enzyme catalyses dCMP + ATP = dCDP + ADP. The sequence is that of Cytidylate kinase from Xanthomonas axonopodis pv. citri (strain 306).